The chain runs to 698 residues: Potassium-transporting ATPase ATP-binding subunit (698 aa).

The next 4 helical transmembrane spans lie at 56–76 (IMFV…VPSL), 82–102 (LWFN…ANFA), 240–260 (TVLI…PLFT), and 271–291 (ILVA…LSAI). Asp324 serves as the catalytic 4-aspartylphosphate intermediate. ATP-binding positions include Asp361, Glu365, 393–400 (FKAETRMS), and Lys412. The Mg(2+) site is built by Asp535 and Asp539. Helical transmembrane passes span 605–625 (FAII…LNIM), 633–653 (AILS…PLAM), and 677–697 (GGVL…GLFI).

This sequence belongs to the cation transport ATPase (P-type) (TC 3.A.3) family. Type IA subfamily. The system is composed of three essential subunits: KdpA, KdpB and KdpC.

It localises to the cell membrane. It carries out the reaction K(+)(out) + ATP + H2O = K(+)(in) + ADP + phosphate + H(+). Part of the high-affinity ATP-driven potassium transport (or Kdp) system, which catalyzes the hydrolysis of ATP coupled with the electrogenic transport of potassium into the cytoplasm. This subunit is responsible for energy coupling to the transport system and for the release of the potassium ions to the cytoplasm. In Bacillus cytotoxicus (strain DSM 22905 / CIP 110041 / 391-98 / NVH 391-98), this protein is Potassium-transporting ATPase ATP-binding subunit.